The following is a 135-amino-acid chain: Probable histone H2A.1 (135 aa).

This sequence belongs to the histone H2A family. As to quaternary structure, the nucleosome is a histone octamer containing two molecules each of H2A, H2B, H3 and H4 assembled in one H3-H4 heterotetramer and two H2A-H2B heterodimers. The octamer wraps approximately 147 bp of DNA.

The protein resides in the nucleus. The protein localises to the chromosome. Its function is as follows. Core component of nucleosome. Nucleosomes wrap and compact DNA into chromatin, limiting DNA accessibility to the cellular machineries which require DNA as a template. Histones thereby play a central role in transcription regulation, DNA repair, DNA replication and chromosomal stability. DNA accessibility is regulated via a complex set of post-translational modifications of histones, also called histone code, and nucleosome remodeling. This chain is Probable histone H2A.1, found in Oryza sativa subsp. japonica (Rice).